A 203-amino-acid chain; its full sequence is 3-isopropylmalate dehydratase small subunit (203 aa).

This sequence belongs to the LeuD family. LeuD type 1 subfamily. As to quaternary structure, heterodimer of LeuC and LeuD.

The enzyme catalyses (2R,3S)-3-isopropylmalate = (2S)-2-isopropylmalate. Its pathway is amino-acid biosynthesis; L-leucine biosynthesis; L-leucine from 3-methyl-2-oxobutanoate: step 2/4. In terms of biological role, catalyzes the isomerization between 2-isopropylmalate and 3-isopropylmalate, via the formation of 2-isopropylmaleate. This chain is 3-isopropylmalate dehydratase small subunit, found in Pelagibacter ubique (strain HTCC1062).